We begin with the raw amino-acid sequence, 212 residues long: Major fimbrial subunit (212 aa).

A signal peptide spans 1 to 18; that stretch reads MKKTLLGSLILLAFATNA. Residues Cys-42 and Cys-82 are joined by a disulfide bond.

This sequence belongs to the fimbrial protein family.

The protein localises to the fimbrium. Mediates adherence to oropharyngeal epithelial cells. Helps the airway colonization process. In Haemophilus influenzae, this protein is Major fimbrial subunit (hifA).